The primary structure comprises 32 residues: Hyaluronidase-Pk1a (32 aa).

An N-linked (GlcNAc...) asparagine glycan is attached at asparagine 23.

This sequence belongs to the glycosyl hydrolase 56 family. As to expression, expressed by the venom gland.

The protein localises to the secreted. The enzyme catalyses Random hydrolysis of (1-&gt;4)-linkages between N-acetyl-beta-D-glucosamine and D-glucuronate residues in hyaluronate.. Hydrolyzes high molecular weight hyaluronic acid to produce small oligosaccharides. The protein is Hyaluronidase-Pk1a of Phoneutria keyserlingi (Brazilian wandering spider).